Here is a 214-residue protein sequence, read N- to C-terminus: Probable transaldolase (214 aa).

Lys-83 functions as the Schiff-base intermediate with substrate in the catalytic mechanism.

The protein belongs to the transaldolase family. Type 3B subfamily.

It localises to the cytoplasm. The enzyme catalyses D-sedoheptulose 7-phosphate + D-glyceraldehyde 3-phosphate = D-erythrose 4-phosphate + beta-D-fructose 6-phosphate. It participates in carbohydrate degradation; pentose phosphate pathway; D-glyceraldehyde 3-phosphate and beta-D-fructose 6-phosphate from D-ribose 5-phosphate and D-xylulose 5-phosphate (non-oxidative stage): step 2/3. Transaldolase is important for the balance of metabolites in the pentose-phosphate pathway. The chain is Probable transaldolase from Desulfatibacillum aliphaticivorans.